Reading from the N-terminus, the 232-residue chain is Ubiquitin-conjugating enzyme E2-24 kDa (232 aa).

The segment covering 1–37 (MSSTPAAGSAAEVATSSATSNAPSAPSTTASNVSNTS) has biased composition (low complexity). Residues 1–87 (MSSTPAAGSA…PRISRALGTS (87 aa)) are disordered. Positions 58–67 (GASGSNAGGG) are enriched in gly residues. Residues 86 to 232 (TSAKRIQKEL…ARLWTKRYAT (147 aa)) enclose the UBC core domain. C170 acts as the Glycyl thioester intermediate in catalysis.

The protein belongs to the ubiquitin-conjugating enzyme family.

It carries out the reaction S-ubiquitinyl-[E1 ubiquitin-activating enzyme]-L-cysteine + [E2 ubiquitin-conjugating enzyme]-L-cysteine = [E1 ubiquitin-activating enzyme]-L-cysteine + S-ubiquitinyl-[E2 ubiquitin-conjugating enzyme]-L-cysteine.. It participates in protein modification; protein ubiquitination. Functionally, catalyzes the covalent attachment of ubiquitin to other proteins. The polypeptide is Ubiquitin-conjugating enzyme E2-24 kDa (Drosophila melanogaster (Fruit fly)).